We begin with the raw amino-acid sequence, 904 residues long: DNA mismatch repair protein MutS (904 aa).

655 to 662 provides a ligand contact to ATP; that stretch reads GPNMGGKS.

The protein belongs to the DNA mismatch repair MutS family.

This protein is involved in the repair of mismatches in DNA. It is possible that it carries out the mismatch recognition step. This protein has a weak ATPase activity. The chain is DNA mismatch repair protein MutS from Agrobacterium fabrum (strain C58 / ATCC 33970) (Agrobacterium tumefaciens (strain C58)).